Consider the following 728-residue polypeptide: Cellulose synthase-like protein E6 (728 aa).

2 helical membrane passes run 21–43 (AVYR…YRAT) and 53–73 (AAWL…VITQ). Residues D141 and D446 contribute to the active site. 5 helical membrane-spanning segments follow: residues 523–543 (LWAA…LGLV), 546–566 (TPLF…VFCV), 646–666 (PEFV…VAGL), 669–689 (IMAG…LIVI), and 707–727 (IPLP…LLPI).

This sequence belongs to the glycosyltransferase 2 family. Plant cellulose synthase-like E subfamily.

It localises to the golgi apparatus membrane. In terms of biological role, thought to be a Golgi-localized beta-glycan synthase that polymerize the backbones of noncellulosic polysaccharides (hemicelluloses) of plant cell wall. The chain is Cellulose synthase-like protein E6 (CSLE6) from Oryza sativa subsp. japonica (Rice).